Consider the following 377-residue polypeptide: Chaperone protein DnaJ (377 aa).

The region spanning 5-69 (EYYDRLGLSK…QKRAAYDQYG (65 aa)) is the J domain. The CR-type zinc finger occupies 133–215 (GAEKEIHYNR…CHGTGREKQS (83 aa)). Positions 146, 149, 163, 166, 189, 192, 203, and 206 each coordinate Zn(2+). 4 CXXCXGXG motif repeats span residues 146–153 (CKTCSGSG), 163–170 (CGRCHGHG), 189–196 (CDVCHGTG), and 203–210 (CQTCHGTG).

Belongs to the DnaJ family. As to quaternary structure, homodimer. Zn(2+) is required as a cofactor.

It localises to the cytoplasm. Its function is as follows. Participates actively in the response to hyperosmotic and heat shock by preventing the aggregation of stress-denatured proteins and by disaggregating proteins, also in an autonomous, DnaK-independent fashion. Unfolded proteins bind initially to DnaJ; upon interaction with the DnaJ-bound protein, DnaK hydrolyzes its bound ATP, resulting in the formation of a stable complex. GrpE releases ADP from DnaK; ATP binding to DnaK triggers the release of the substrate protein, thus completing the reaction cycle. Several rounds of ATP-dependent interactions between DnaJ, DnaK and GrpE are required for fully efficient folding. Also involved, together with DnaK and GrpE, in the DNA replication of plasmids through activation of initiation proteins. The polypeptide is Chaperone protein DnaJ (Streptococcus thermophilus (strain CNRZ 1066)).